A 1312-amino-acid polypeptide reads, in one-letter code: DNA repair protein RAD50.L (1312 aa).

ATP is bound by residues Arg13, Asn38, Gly39, Gly41, Lys42, Thr43, Thr44, Val67, Asp69, and Gln159. Mg(2+) is bound at residue Thr43. Gln159 lines the Mg(2+) pocket. 3 coiled-coil regions span residues Val203–Glu342, Leu415–Arg558, and Ile587–Lys628. One can recognise a Zinc-hook domain in the interval Ser635–Pro734. Residues Cys681 and Cys684 each contribute to the Zn(2+) site. Positions Leu712–Asn1070 form a coiled coil.

It belongs to the SMC family. RAD50 subfamily. As to quaternary structure, component of the MRN complex composed of two heterodimers RAD50 and MRE11 associated with a single NBN. Requires Zn(2+) as cofactor.

The protein localises to the nucleus. The protein resides in the chromosome. It is found in the telomere. The catalysed reaction is ATP + H2O = ADP + phosphate + H(+). Functionally, component of the MRN complex, which plays a central role in double-strand break (DSB) repair, DNA recombination, maintenance of telomere integrity and meiosis. The MRN complex is involved in the repair of DNA double-strand breaks (DSBs) via homologous recombination (HR), an error-free mechanism which primarily occurs during S and G2 phases. The complex (1) mediates the end resection of damaged DNA, which generates proper single-stranded DNA, a key initial steps in HR, and is (2) required for the recruitment of other repair factors and efficient activation of ATM and ATR upon DNA damage. The MRN complex possesses single-strand endonuclease activity and double-strand-specific 3'-5' exonuclease activity, which are provided by mre11, to initiate end resection, which is required for single-strand invasion and recombination. Within the complex, rad50 is both required to bind DNA ends and hold them in close proximity and regulate the activity of MRE11. Rad50 provides an ATP-dependent control of MRE11 by positioning DNA ends into the mre11 active site: ATP-binding induces a large structural change from an open form with accessible MRE11 nuclease sites into a closed form. The MRN complex is also required for DNA damage signaling via activation of the atm and atr kinases: the nuclease activity of mre11 is not required to activate ATM and ATR. The MRN complex promotes recruitment of topbp1 to DNA damage sites. The MRN complex and rbbp8/CtIP are also required for chromosome alignment during metaphase. In Xenopus laevis (African clawed frog), this protein is DNA repair protein RAD50.L.